The chain runs to 302 residues: tRNA pseudouridine synthase B (302 aa).

Residue D47 is the Nucleophile of the active site.

Belongs to the pseudouridine synthase TruB family. Type 1 subfamily.

The catalysed reaction is uridine(55) in tRNA = pseudouridine(55) in tRNA. In terms of biological role, responsible for synthesis of pseudouridine from uracil-55 in the psi GC loop of transfer RNAs. The protein is tRNA pseudouridine synthase B of Ruegeria sp. (strain TM1040) (Silicibacter sp.).